A 796-amino-acid chain; its full sequence is ER degradation-enhancing alpha-mannosidase-like protein 1 (796 aa).

Residues M1–C20 form the signal peptide. A glycan (N-linked (GlcNAc...) asparagine) is linked at N86. E372 acts as the Proton donor in catalysis. T495 serves as a coordination point for Ca(2+). 3 N-linked (GlcNAc...) asparagine glycosylation sites follow: N517, N672, and N762.

Belongs to the glycosyl hydrolase 47 family. In terms of assembly, interacts with PDI1. Ca(2+) serves as cofactor.

The protein resides in the endoplasmic reticulum lumen. It catalyses the reaction Hydrolysis of terminal, non-reducing alpha-D-mannose residues in alpha-D-mannosides.. It participates in protein modification; protein glycosylation. Functionally, alpha-1,2-specific exomannosidase involved in endoplasmic reticulum-associated degradation (ERAD). Delivers misfolded glycoproteins to proteasomes. Forms a complex with PDI1 to process unfolded protein-bound Man8GlcNAc2 oligosaccharides to Man7GlcNAc2, promoting degradation in unfolded protein response. In Saccharomyces cerevisiae (strain ATCC 204508 / S288c) (Baker's yeast), this protein is ER degradation-enhancing alpha-mannosidase-like protein 1 (MNL1).